The sequence spans 282 residues: Hepatitis A virus cellular receptor 2 homolog (282 aa).

The N-terminal stretch at 1 to 21 is a signal peptide; the sequence is MFSWLPFSCALLLLQPLPARS. One can recognise an Ig-like V-type domain in the interval 22–131; sequence LENAYTAEVG…EKLELKLSIT (110 aa). The Extracellular portion of the chain corresponds to 22–194; sequence LENAYTAEVG…KDSGETIRTA (173 aa). Disulfide bonds link Cys38-Cys111, Cys52-Cys63, and Cys58-Cys110. Gln62 is a binding site for a 1,2-diacyl-sn-glycero-3-phospho-L-serine. 2 N-linked (GlcNAc...) asparagine glycosylation sites follow: Asn74 and Asn100. Residue Arg112 participates in a 1,2-diacyl-sn-glycero-3-phospho-L-serine binding. 2 residues coordinate Ca(2+): Phe115 and Gly117. Met119 provides a ligand contact to a 1,2-diacyl-sn-glycero-3-phospho-L-serine. Asn120 provides a ligand contact to Ca(2+). Residues 138–163 are disordered; that stretch reads PAGTAHGDSTTASPRTLTTEGSGSET. Residues 144–163 are compositionally biased toward polar residues; sequence GDSTTASPRTLTTEGSGSET. Residue Thr147 is glycosylated (O-linked (GalNAc...) threonine). The N-linked (GlcNAc...) asparagine glycan is linked to Asn173. The chain crosses the membrane as a helical span at residues 195–215; the sequence is VHIGVGVSAGLALALILGVLI. Residues 216–282 lie on the Cytoplasmic side of the membrane; sequence LKWYSSKKKK…YCYVSSQQPS (67 aa). Positions 253 to 271 are interaction with BAG6; it reads EENIYTIEENIYEMENSNE. A Phosphotyrosine; by ITK modification is found at Tyr257.

The protein belongs to the immunoglobulin superfamily. TIM family. As to quaternary structure, interacts with HMGB1; impairs HMGB1 binding to B-DNA and likely HMGB1-mediated innate immune response. Interacts with BAG6. Interacts (phosphorylated) with PIK3R1 and PIK3R2. Interacts (not dependent on its phosphorylation status) with FYN. Interacts (in basal state T-cells) with VAV1; AKT1/2, LCP2, ZAP70, SYK, PIK3R1, FYN, SH3BP2 and SH2D2A. Interacts (in activated T-cells) with LCK and PLCG. Interacts with ILF3; this interaction promotes ILF3 ubiquitination and degradation.

Its subcellular location is the membrane. It is found in the cell junction. In terms of biological role, cell surface receptor implicated in modulating innate and adaptive immune responses. Generally accepted to have an inhibiting function. Reports on stimulating functions suggest that the activity may be influenced by the cellular context and/or the respective ligand. Regulates macrophage activation. Inhibits T-helper type 1 lymphocyte (Th1)-mediated auto- and alloimmune responses and promotes immunological tolerance. In CD8+ cells attenuates TCR-induced signaling, specifically by blocking NF-kappaB and NFAT promoter activities resulting in the loss of IL-2 secretion. The function may implicate its association with LCK proposed to impair phosphorylation of TCR subunits. In contrast, shown to activate TCR-induced signaling in T-cells probably implicating ZAP70, LCP2, LCK and FYN. Expressed on Treg cells can inhibit Th17 cell responses. Receptor for LGALS9. Binding to LGALS9 is believed to result in suppression of T-cell responses; the resulting apoptosis of antigen-specific cells may implicate HAVCR2 phosphorylation and disruption of its association with BAG6. Binding to LGALS9 is proposed to be involved in innate immune response to intracellular pathogens. Expressed on Th1 cells interacts with LGALS9 expressed on Mycobacterium tuberculosis-infected macrophages to stimulate antibactericidal activity including IL-1 beta secretion and to restrict intracellular bacterial growth. However, the function as receptor for LGALS9 has been challenged. Also reported to enhance CD8+ T cell responses to an acute infection such as by Listeria monocytogenes. Receptor for phosphatidylserine (PtSer); PtSer-binding is calcium-dependent. May recognize PtSer on apoptotic cells leading to their phagocytosis. Mediates the engulfment of apoptotic cells by dendritic cells. Expressed on T-cells, promotes conjugation but not engulfment of apoptotic cells. Expressed on dendritic cells (DCs) positively regulates innate immune response and in synergy with Toll-like receptors promotes secretion of TNF-alpha. In tumor-imfiltrating DCs suppresses nucleic acid-mediated innate immune repsonse by interaction with HMGB1 and interfering with nucleic acid-sensing and trafficking of nucleid acids to endosomes. Can enhance mast cell production of Th2 cytokines Il-4, IL-6 and IL-13. Expressed on natural killer (NK) cells acts as a coreceptor to enhance IFN-gamma production in response to LGALS9. In contrast, shown to suppress NK cell-mediated cytotoxicity. Negatively regulates NK cell function in LPS-induced endotoxic shock. The chain is Hepatitis A virus cellular receptor 2 homolog (Havcr2) from Rattus norvegicus (Rat).